Reading from the N-terminus, the 205-residue chain is Beta-crystallin B2 (205 aa).

An N-acetylalanine modification is found at A2. The interval 2-16 (ASDHQTQAGKPQPLN) is N-terminal arm. 2 Beta/gamma crystallin 'Greek key' domains span residues 17 to 56 (PKIIIFEQENFQGHSHELNGPCPNLKETGVEKAGSVLVQA) and 57 to 101 (GPWV…RPIK). Residues 102–106 (VDSQE) form a connecting peptide region. 2 Beta/gamma crystallin 'Greek key' domains span residues 107–148 (HKII…RVQS) and 149–191 (GTWV…RRIR). Positions 193 to 205 (MQWHQRGAFHPTN) are C-terminal arm.

It belongs to the beta/gamma-crystallin family. As to quaternary structure, homo/heterodimer, or complexes of higher-order. The structure of beta-crystallin oligomers seems to be stabilized through interactions between the N-terminal arms.

Functionally, crystallins are the dominant structural components of the vertebrate eye lens. The sequence is that of Beta-crystallin B2 (CRYBB2) from Oryctolagus cuniculus (Rabbit).